A 548-amino-acid chain; its full sequence is Cleavage and polyadenylation specificity factor subunit 6 (548 aa).

Residues 81–161 (IALYIGNLTW…QKPIVTPCNK (81 aa)) enclose the RRM domain. A compositionally biased stretch (polar residues) spans 169-180 (MQSRKTATQAGQ). Disordered stretches follow at residues 169–401 (MQSR…MDVV) and 473–548 (LHGI…YRHR). Pro residues-rich tracts occupy residues 221-279 (PAGP…PPVM), 294-362 (PPGP…PPPG), and 373-384 (GPPPSDPYGRPP). 2 stretches are compositionally biased toward basic and acidic residues: residues 385 to 400 (PYERGDYGPPGRDMDV) and 490 to 500 (RSRERDHSRSR). Positions 501-511 (EKSRRHKSRSR) are enriched in basic residues. The span at 512–548 (DRHDDYYRERSRERERHRDRERDRDRERDREREYRHR) shows a compositional bias: basic and acidic residues.

It belongs to the RRM CPSF6/7 family. In terms of assembly, component of the cleavage factor Im (CFIm) complex.

It localises to the nucleus. It is found in the nucleoplasm. The protein resides in the nucleus speckle. The protein localises to the cytoplasm. Component of the cleavage factor Im (CFIm) complex that functions as an activator of the pre-mRNA 3'-end cleavage and polyadenylation processing required for the maturation of pre-mRNA into functional mRNAs. CFIm contributes to the recruitment of multiprotein complexes on specific sequences on the pre-mRNA 3'-end, so called cleavage and polyadenylation signals (pA signals). Most pre-mRNAs contain multiple pA signals, resulting in alternative cleavage and polyadenylation (APA) producing mRNAs with variable 3'-end formation. The CFIm complex acts as a key regulator of cleavage and polyadenylation site choice during APA through its binding to 5'-UGUA-3' elements localized in the 3'-untranslated region (UTR) for a huge number of pre-mRNAs. Plays a role in mRNA export. The sequence is that of Cleavage and polyadenylation specificity factor subunit 6 from Xenopus laevis (African clawed frog).